We begin with the raw amino-acid sequence, 298 residues long: Bifunctional protein FolD (298 aa).

Residues 167 to 169 (GRS), Ser192, and Val233 each bind NADP(+).

The protein belongs to the tetrahydrofolate dehydrogenase/cyclohydrolase family. As to quaternary structure, homodimer.

It carries out the reaction (6R)-5,10-methylene-5,6,7,8-tetrahydrofolate + NADP(+) = (6R)-5,10-methenyltetrahydrofolate + NADPH. The catalysed reaction is (6R)-5,10-methenyltetrahydrofolate + H2O = (6R)-10-formyltetrahydrofolate + H(+). It functions in the pathway one-carbon metabolism; tetrahydrofolate interconversion. Catalyzes the oxidation of 5,10-methylenetetrahydrofolate to 5,10-methenyltetrahydrofolate and then the hydrolysis of 5,10-methenyltetrahydrofolate to 10-formyltetrahydrofolate. The chain is Bifunctional protein FolD from Chelativorans sp. (strain BNC1).